Here is a 273-residue protein sequence, read N- to C-terminus: Urease accessory protein UreD (273 aa).

The protein belongs to the UreD family. UreD, UreF and UreG form a complex that acts as a GTP-hydrolysis-dependent molecular chaperone, activating the urease apoprotein by helping to assemble the nickel containing metallocenter of UreC. The UreE protein probably delivers the nickel.

It localises to the cytoplasm. Its function is as follows. Required for maturation of urease via the functional incorporation of the urease nickel metallocenter. The sequence is that of Urease accessory protein UreD from Rhizobium leguminosarum bv. viciae.